The following is a 1095-amino-acid chain: Mediator of RNA polymerase II transcription subunit 15 (1095 aa).

Residues 66 to 83 are compositionally biased toward basic and acidic residues; sequence KSKIDAMRSTRDKRKRES. Disordered regions lie at residues 66-197, 265-323, 448-508, 633-672, 737-847, and 1050-1075; these read KSKI…LTQQ, QQQQ…RNPN, SAAD…LNPT, QQQQ…KNQT, PTMA…QPGN, and SEAA…SMAG. Low complexity-rich tracts occupy residues 99–113 and 133–154; these read NNNN…NNLN and NSNA…PNGN. Polar residues predominate over residues 155–165; sequence DGTANPQMFMN. Low complexity predominate over residues 166–178; the sequence is QQAQARQQAAARQ. The segment covering 448 to 473 has biased composition (polar residues); the sequence is SAADSTMNNSNQPMNIGNNGVNMIPN. Composition is skewed to low complexity over residues 487–500, 633–662, and 780–793; these read QTPQ…QSNR, QQQQ…MQQA, and PTPQ…PSTT. Composition is skewed to polar residues over residues 794 to 810, 817 to 847, and 1050 to 1062; these read NLSA…SATP, PKST…QPGN, and SEAA…SSLM.

The protein belongs to the Mediator complex subunit 15 family. Component of the Mediator complex.

The protein localises to the nucleus. Its function is as follows. Component of the Mediator complex, a coactivator involved in regulated gene transcription of nearly all RNA polymerase II-dependent genes. Mediator functions as a bridge to convey information from gene-specific regulatory proteins to the basal RNA polymerase II transcription machinery. Mediator is recruited to promoters by direct interactions with regulatory proteins and serves as a scaffold for the assembly of a functional preinitiation complex with RNA polymerase II and the general transcription factors. The sequence is that of Mediator of RNA polymerase II transcription subunit 15 (GAL11) from Candida glabrata (strain ATCC 2001 / BCRC 20586 / JCM 3761 / NBRC 0622 / NRRL Y-65 / CBS 138) (Yeast).